Here is a 209-residue protein sequence, read N- to C-terminus: Uracil phosphoribosyltransferase (209 aa).

5-phospho-alpha-D-ribose 1-diphosphate contacts are provided by residues R79, R104, and 131 to 139; that span reads DPMLATGGS. Residues I194 and 199–201 each bind uracil; that span reads GDA. A 5-phospho-alpha-D-ribose 1-diphosphate-binding site is contributed by D200.

This sequence belongs to the UPRTase family. It depends on Mg(2+) as a cofactor.

The enzyme catalyses UMP + diphosphate = 5-phospho-alpha-D-ribose 1-diphosphate + uracil. It functions in the pathway pyrimidine metabolism; UMP biosynthesis via salvage pathway; UMP from uracil: step 1/1. With respect to regulation, allosterically activated by GTP. In terms of biological role, catalyzes the conversion of uracil and 5-phospho-alpha-D-ribose 1-diphosphate (PRPP) to UMP and diphosphate. This chain is Uracil phosphoribosyltransferase, found in Streptococcus equi subsp. zooepidemicus (strain MGCS10565).